Reading from the N-terminus, the 428-residue chain is U2 small nuclear ribonucleoprotein auxiliary factor 35 kDa subunit-related protein 2-like (428 aa).

The disordered stretch occupies residues 1–51; that stretch reads MASRQTAIPEKLSRKQYKAAMKKEKRKKRRQKMARLRALEAPPEEDDDVSA. The segment covering 23–35 has biased composition (basic residues); that stretch reads KEKRKKRRQKMAR. The segment covering 42–51 has biased composition (acidic residues); that stretch reads PPEEDDDVSA. Position 50 is a phosphoserine (Ser50). Residues 157–185 form a C3H1-type 1 zinc finger; sequence EKYRPSCPFYNKTGACRFGNRCSRKHDFP. Positions 189–295 constitute an RRM domain; the sequence is PTLLVKSMFT…RQLQCEFCPV (107 aa). The C3H1-type 2 zinc-finger motif lies at 297–324; that stretch reads RWKVAICGLFEMQKCPKGKHCNFLHVFR. Residues 339-428 form a disordered region; the sequence is MSPPAWTGSS…PGPQSQSHRT (90 aa). The residue at position 340 (Ser340) is a Phosphoserine. Over residues 351–366 the composition is skewed to basic and acidic residues; the sequence is NSDRRERKDHHEEYYS. The span at 367–377 shows a compositional bias: low complexity; it reads KSRSYHSGSYH. At Ser375 the chain carries Phosphoserine. A compositionally biased stretch (basic residues) spans 389–410; the sequence is SPHRWKKSHKQTTKSHERHSSR. Polar residues predominate over residues 419-428; that stretch reads PGPQSQSHRT.

In terms of assembly, interacts with SF3B1. Interacts with ZCRB1. In terms of tissue distribution, highest expression levels are detected in the brain, and lower expression levels in other tissues like epididymis, testis, bone marrow or muscle. In testis, expressed in both Sertoli and spermatogenic cell.

The protein resides in the nucleus. Functionally, plays a role in splicing of the U12-type introns. Implicated also in removal of U2 introns positioned adjacent to a U12 intron. This is U2 small nuclear ribonucleoprotein auxiliary factor 35 kDa subunit-related protein 2-like from Mus musculus (Mouse).